The primary structure comprises 509 residues: Transmembrane protein 102 (509 aa).

The Extracellular segment spans residues 1–312 (MASTVWGGAP…VLLATPEPPR (312 aa)). Residues 167–236 (PPVPEESDMT…NPETPEPLET (70 aa)) are disordered. The span at 174-204 (DMTHQTHSKESPTDRENSVDPSHDYVPEPEP) shows a compositional bias: basic and acidic residues. Residues 207–224 (SLQKSSSDLSESQSSYKD) are compositionally biased toward low complexity. The helical transmembrane segment at 313–329 (HLLLFDLIPVVTVTGWP) threads the bilayer. Residues 330 to 509 (DTARSHSWAG…GLAGVGGGTH (180 aa)) lie on the Cytoplasmic side of the membrane.

As to quaternary structure, interacts with CSF2RB; this interaction occurs preferentially in the absence of CSF2.

The protein resides in the cell membrane. Its function is as follows. Selectively involved in CSF2 deprivation-induced apoptosis via a mitochondria-dependent pathway. In Mus musculus (Mouse), this protein is Transmembrane protein 102 (Tmem102).